A 704-amino-acid chain; its full sequence is Elongation factor G (704 aa).

One can recognise a tr-type G domain in the interval 8-291 (DKVRNIGIMA…AVIDYLASPV (284 aa)). GTP is bound by residues 17-24 (AHIDAGKT), 90-94 (DTPGH), and 144-147 (NKMD).

This sequence belongs to the TRAFAC class translation factor GTPase superfamily. Classic translation factor GTPase family. EF-G/EF-2 subfamily.

It is found in the cytoplasm. In terms of biological role, catalyzes the GTP-dependent ribosomal translocation step during translation elongation. During this step, the ribosome changes from the pre-translocational (PRE) to the post-translocational (POST) state as the newly formed A-site-bound peptidyl-tRNA and P-site-bound deacylated tRNA move to the P and E sites, respectively. Catalyzes the coordinated movement of the two tRNA molecules, the mRNA and conformational changes in the ribosome. In Chlorobaculum parvum (strain DSM 263 / NCIMB 8327) (Chlorobium vibrioforme subsp. thiosulfatophilum), this protein is Elongation factor G.